A 218-amino-acid chain; its full sequence is Eukaryotic translation initiation factor 3 subunit K (218 aa).

An N-acetylalanine modification is found at A2. T28 carries the post-translational modification Phosphothreonine. The PCI domain maps to Y42–K204. The residue at position 217 (S217) is a Phosphoserine.

As to quaternary structure, component of the eukaryotic translation initiation factor 3 (eIF-3) complex, which is composed of 13 subunits: EIF3A, EIF3B, EIF3C, EIF3D, EIF3E, EIF3F, EIF3G, EIF3H, EIF3I, EIF3J, EIF3K, EIF3L and EIF3M. The eIF-3 complex appears to include 3 stable modules: module A is composed of EIF3A, EIF3B, EIF3G and EIF3I; module B is composed of EIF3F, EIF3H, and EIF3M; and module C is composed of EIF3C, EIF3D, EIF3E, EIF3K and EIF3L. EIF3C of module C binds EIF3B of module A and EIF3H of module B, thereby linking the three modules. EIF3J is a labile subunit that binds to the eIF-3 complex via EIF3B. The eIF-3 complex interacts with RPS6KB1 under conditions of nutrient depletion. Mitogenic stimulation leads to binding and activation of a complex composed of MTOR and RPTOR, leading to phosphorylation and release of RPS6KB1 and binding of EIF4B to eIF-3. Interacts with CCND3, but not with CCND1 and CCND2. As to expression, ubiquitous, with the highest levels of expression in brain, testis and kidney.

The protein resides in the nucleus. It localises to the cytoplasm. Its function is as follows. Component of the eukaryotic translation initiation factor 3 (eIF-3) complex, which is required for several steps in the initiation of protein synthesis. The eIF-3 complex associates with the 40S ribosome and facilitates the recruitment of eIF-1, eIF-1A, eIF-2:GTP:methionyl-tRNAi and eIF-5 to form the 43S pre-initiation complex (43S PIC). The eIF-3 complex stimulates mRNA recruitment to the 43S PIC and scanning of the mRNA for AUG recognition. The eIF-3 complex is also required for disassembly and recycling of post-termination ribosomal complexes and subsequently prevents premature joining of the 40S and 60S ribosomal subunits prior to initiation. The eIF-3 complex specifically targets and initiates translation of a subset of mRNAs involved in cell proliferation, including cell cycling, differentiation and apoptosis, and uses different modes of RNA stem-loop binding to exert either translational activation or repression. The sequence is that of Eukaryotic translation initiation factor 3 subunit K from Homo sapiens (Human).